Consider the following 85-residue polypeptide: Augerpeptide-s6a (85 aa).

Residues 1 to 20 (MTLTMSTVVFFSLILLTLGL) form the signal peptide. The propeptide occupies 21–43 (QPKDKDEGVMGRSRLGKRGLLMR). Intrachain disulfides connect C54–C65, C58–C70, and C64–C81.

As to expression, expressed by the venom duct.

Its subcellular location is the secreted. This chain is Augerpeptide-s6a, found in Terebra subulata (Chocolate spotted auger).